Here is a 38-residue protein sequence, read N- to C-terminus: Antimicrobial peptide 1 (38 aa).

Post-translationally, disulfide bonds. Expressed in flowers but not in leaves, seeds or roots (at protein level).

Antimicrobial peptide. Active against fungal species B.cinerea (IC(50)=5.8 uM) and A.niger (IC(50)=5.6 uM) but not against F.oxysporum, F.graminearum, B.sorokinina and P.debaryanum at concentrations below 10 uM. Active against bacterial species P.syringae, B.subtilis and X.campestris. This is Antimicrobial peptide 1 from Taraxacum officinale (Common dandelion).